Consider the following 2779-residue polypeptide: Protein lava lamp (2779 aa).

3 disordered regions span residues 31–62 (LAGS…DSLK), 79–98 (ALRK…SMES), and 110–135 (KTRS…VSLL). The span at 33-51 (GSSNDLSSLQNVSASTTRG) shows a compositional bias: polar residues. Phosphoserine is present on residues serine 34 and serine 35. The stretch at 52–85 (TKGKGRLDSLKENLYKQQERLTALKERALRKSQD) forms a coiled coil. The segment covering 79–91 (ALRKSQDERHKSS) has biased composition (basic and acidic residues). Residues serine 95, serine 98, serine 122, and serine 133 each carry the phosphoserine modification. Residues 141 to 175 (EKLLMLTQRTEQNRALLEQRKRDLAKSLLSVKSNI) adopt a coiled-coil conformation. Phosphoserine is present on residues serine 186, serine 352, and serine 354. Coiled coils occupy residues 220–607 (ESRV…AESI) and 659–716 (GETL…KDLI). A compositionally biased stretch (basic and acidic residues) spans 337 to 352 (ERQRNLELEQEQEKAS). Disordered stretches follow at residues 337 to 366 (ERQR…DAQV), 622 to 662 (RPAS…GETL), 711 to 730 (REKD…QELS), and 1716 to 1753 (QAQL…GGDA). 2 stretches are compositionally biased toward low complexity: residues 717-730 (SSTS…QELS) and 1716-1740 (QAQL…QSQQ). 3 coiled-coil regions span residues 751–1733 (LFEK…QHHH), 1785–1863 (TIED…KLIQ), and 1941–2433 (NEAP…QSQN). 4 disordered regions span residues 2348–2367 (EDKE…GETV), 2484–2507 (EEVT…EATS), 2552–2578 (NRGG…TANE), and 2633–2665 (TERS…AGSN). Positions 2488-2502 (QQQQRELPQSQQSTQ) are enriched in low complexity. Residues 2504-2544 (EATSDIMQKMQKALETQEMEIVTLKEQLAIRSAEYARLAAQ) are a coiled coil. A coiled-coil region spans residues 2600–2641 (DMRVEEMIVELVQLLEERDHLQLKLSDTLRQLETERSRVSDE). Residues 2643-2665 (SATASSSAASSSSPSKISSAGSN) are compositionally biased toward low complexity.

Interacts with CLIP-190 and spectrin separately.

The protein resides in the golgi apparatus. It localises to the cytoplasmic vesicle. It is found in the autophagosome. Its function is as follows. Lva and spectrin may form a Golgi-based scaffold that mediates interaction of Golgi bodies with microtubules and facilitates Golgi-derived membrane secretion required for the formation of furrows during cellularization. Under starvation conditions recruited by ema to developing autophagsosomes where it may function in autophagosome growth. This is Protein lava lamp (lva) from Drosophila melanogaster (Fruit fly).